A 320-amino-acid chain; its full sequence is Cytochrome f (320 aa).

The signal sequence occupies residues Met-1–Ala-35. The heme site is built by Tyr-36, Cys-56, Cys-59, and His-60. A helical transmembrane segment spans residues Val-286–Lys-306.

The protein belongs to the cytochrome f family. As to quaternary structure, the 4 large subunits of the cytochrome b6-f complex are cytochrome b6, subunit IV (17 kDa polypeptide, petD), cytochrome f and the Rieske protein, while the 4 small subunits are PetG, PetL, PetM and PetN. The complex functions as a dimer. It depends on heme as a cofactor.

It is found in the plastid. It localises to the chloroplast thylakoid membrane. In terms of biological role, component of the cytochrome b6-f complex, which mediates electron transfer between photosystem II (PSII) and photosystem I (PSI), cyclic electron flow around PSI, and state transitions. This chain is Cytochrome f, found in Helianthus annuus (Common sunflower).